Reading from the N-terminus, the 130-residue chain is Small ribosomal subunit protein uS8 (130 aa).

It belongs to the universal ribosomal protein uS8 family. As to quaternary structure, part of the 30S ribosomal subunit. Contacts proteins S5 and S12.

One of the primary rRNA binding proteins, it binds directly to 16S rRNA central domain where it helps coordinate assembly of the platform of the 30S subunit. The sequence is that of Small ribosomal subunit protein uS8 from Coxiella burnetii (strain RSA 331 / Henzerling II).